We begin with the raw amino-acid sequence, 534 residues long: Coiled-coil domain-containing protein 183 (534 aa).

3 coiled-coil regions span residues 10–54 (EAQI…NLRR), 136–209 (DATK…DMTV), and 321–406 (RFLA…LLVI).

This chain is Coiled-coil domain-containing protein 183 (Ccdc183), found in Mus musculus (Mouse).